We begin with the raw amino-acid sequence, 146 residues long: Large ribosomal subunit protein uL15 (146 aa).

Basic and acidic residues predominate over residues 1-18 (MKLHELKPSEGSRKERNR). Positions 1-50 (MKLHELKPSEGSRKERNRVGRGTGSGNGKTSGRGHKGQKARSGGGVRLGF) are disordered. A compositionally biased stretch (gly residues) spans 21–31 (RGTGSGNGKTS).

This sequence belongs to the universal ribosomal protein uL15 family. In terms of assembly, part of the 50S ribosomal subunit.

Binds to the 23S rRNA. The chain is Large ribosomal subunit protein uL15 from Listeria innocua serovar 6a (strain ATCC BAA-680 / CLIP 11262).